Consider the following 43-residue polypeptide: Protein PsbN (43 aa).

A helical transmembrane segment spans residues 7–27; that stretch reads LSIAIGSILLVITGFAIYTAF.

Belongs to the PsbN family.

The protein localises to the cellular thylakoid membrane. Its function is as follows. May play a role in photosystem I and II biogenesis. This chain is Protein PsbN, found in Crocosphaera subtropica (strain ATCC 51142 / BH68) (Cyanothece sp. (strain ATCC 51142)).